The chain runs to 539 residues: Chaperonin GroEL (539 aa).

ATP contacts are provided by residues 29-32, 86-90, glycine 413, 476-478, and aspartate 492; these read TLGP, DGTTT, and NAA.

The protein belongs to the chaperonin (HSP60) family. As to quaternary structure, forms a cylinder of 14 subunits composed of two heptameric rings stacked back-to-back. Interacts with the co-chaperonin GroES.

It is found in the cytoplasm. It carries out the reaction ATP + H2O + a folded polypeptide = ADP + phosphate + an unfolded polypeptide.. Functionally, together with its co-chaperonin GroES, plays an essential role in assisting protein folding. The GroEL-GroES system forms a nano-cage that allows encapsulation of the non-native substrate proteins and provides a physical environment optimized to promote and accelerate protein folding. This Geobacillus sp. (strain WCH70) protein is Chaperonin GroEL.